A 155-amino-acid chain; its full sequence is Cyclic pyranopterin monophosphate synthase (155 aa).

Substrate is bound by residues 75-77 (LCH) and 111-112 (ME). Asp126 is a catalytic residue.

This sequence belongs to the MoaC family. In terms of assembly, homohexamer; trimer of dimers.

The enzyme catalyses (8S)-3',8-cyclo-7,8-dihydroguanosine 5'-triphosphate = cyclic pyranopterin phosphate + diphosphate. The protein operates within cofactor biosynthesis; molybdopterin biosynthesis. Its function is as follows. Catalyzes the conversion of (8S)-3',8-cyclo-7,8-dihydroguanosine 5'-triphosphate to cyclic pyranopterin monophosphate (cPMP). The protein is Cyclic pyranopterin monophosphate synthase of Corynebacterium efficiens (strain DSM 44549 / YS-314 / AJ 12310 / JCM 11189 / NBRC 100395).